The following is a 471-amino-acid chain: Serine hydroxymethyltransferase, cytosolic (471 aa).

Lys-249 is modified (N6-(pyridoxal phosphate)lysine).

The protein belongs to the SHMT family. Pyridoxal 5'-phosphate serves as cofactor.

The protein resides in the cytoplasm. The protein localises to the cytosol. The catalysed reaction is (6R)-5,10-methylene-5,6,7,8-tetrahydrofolate + glycine + H2O = (6S)-5,6,7,8-tetrahydrofolate + L-serine. It functions in the pathway one-carbon metabolism; tetrahydrofolate interconversion. Catalyzes the interconversion of serine and glycine. Essential for viability and required for virulence in a murine model of established pulmonary infection. This chain is Serine hydroxymethyltransferase, cytosolic, found in Aspergillus fumigatus (strain ATCC MYA-4609 / CBS 101355 / FGSC A1100 / Af293) (Neosartorya fumigata).